We begin with the raw amino-acid sequence, 450 residues long: Beclin-1 (450 aa).

N-acetylmethionine is present on methionine 1. Residues serine 15 and serine 30 each carry the phosphoserine modification. The tract at residues 48-72 (TTAQAKPGETQEEETNSGEEPFIET) is disordered. Residues serine 90, serine 93, and serine 96 each carry the phosphoserine; by AMPK modification. The BH3 signature appears at 108–127 (TMENLSRRLKVTGDLFDIMS). Residues 112–159 (LSRRLKVTGDLFDIMSGQTDVDHPLCEECTDTLLDQLDTQLNVTENEC) form an interaction with BCL2 and BCL2L1 region. Threonine 119 is subject to Phosphothreonine; by DAPK1. A coiled-coil region spans residues 142–269 (DTLLDQLDTQ…QLDKLKKTNV (128 aa)). Positions 245–450 (DELKSVENQM…AWVSSQFYNK (206 aa)) are evolutionary conserved domain (ECD). Glycyl lysine isopeptide (Lys-Gly) (interchain with G-Cter in ubiquitin) cross-links involve residues lysine 402 and lysine 437. The tract at residues 425-450 (WTKALKFMLTNLKWGLAWVSSQFYNK) is required for membrane-association.

The protein belongs to the beclin family. In terms of assembly, a homodimeric form is proposed to exist; this metastable form readily transits to ATG14- or UVRAG-containing complexes with BECN1:UVRAG being more stable than BECN1:ATG14. Component of the PI3K (PI3KC3/PI3K-III/class III phosphatidylinositol 3-kinase) complex the core of which is composed of the catalytic subunit PIK3C3, the regulatory subunit PIK3R4 and BECN1 associating with additional regulatory/auxiliary subunits to form alternative complex forms. Alternative complex forms containing a fourth regulatory subunit in a mutually exclusive manner are PI3K complex I (PI3KC3-C1) containing ATG14, and PI3K complex II (PI3KC3-C2) containing UVRAG. PI3KC3-C1 displays a V-shaped architecture with PIK3R4 serving as a bridge between PIK3C3 and the ATG14:BECN1 subcomplex. Both, PI3KC3-C1 and PI3KC3-C2, can associate with further regulatory subunits, such as RUBCN, SH3GLB1/Bif-1 and AMBRA1. PI3KC3-C1 probably associates with PIK3CB. Forms a complex with PPP2CA and AMBRA1; AMBRA1 and BECN1 components of the complex regulate MYC stability via different pathways. Component of the complex, at least composed of LRPPRC, BECN1 and BCL2; the interactions prevent BECN1 from forming an autophagy-inducing complex with PIK3C3. Interacts with AMBRA1, GOPC, GRID2. Interacts with BCL2 and BCL2L1 isoform Bcl-X(L); the interaction inhibits BECN1 function in promoting autophagy by interfering with the formation of the PI3K complex. Interacts with cytosolic HMGB1; inhibits the interaction of BECN1 and BCL2 leading to promotion of autophagy. Interacts with USP10, USP13, VMP1, DAPK1, RAB39A. Interacts with the poly-Gln domain of ATXN3; the interaction causes deubiquitination at Lys-402 and stabilizes BECN1. Interacts with SLAMF1. Interacts with TRIM5; the interaction causes activation of BECN1 by causing its dissociation from its inhibitors BCL2 and TAB2. Interacts with active ULK1 (phosphorylated on 'Ser-317') and MEFV simultaneously. Interacts with WDR81 and WDR91; negatively regulates the PI3 kinase/PI3K activity associated with endosomal membranes. Interacts with LAPTM4B; competes with EGFR for LAPTM4B binding; regulates EGFR activity. Interacts with TRIM50. Interacts with TRIM16. Interacts with ATG14; this interaction is increased in the absence of TMEM39A. Interacts with WASHC1; preventing interaction with AMBRA1 and the DCX(AMBRA1) complex and subsequent ubiquitination. Interacts with TRIM17. Interacts with BCL2L10/BCL-B (via BH1 domain). Interacts with SH3BGRL. Interacts with IRGM; enhancing BECN1-interacting partners and influencing the composition of the BECN1 complex. Interacts with ARMC3. Interacts with LRPPRC. Post-translationally, phosphorylation at Thr-119 by DAPK1 reduces its interaction with BCL2 and BCL2L1 and promotes induction of autophagy. In response to autophagic stimuli, phosphorylated at serine residues by AMPK in an ATG14-dependent manner, and this phosphorylation is critical for maximally efficient autophagy. In terms of processing, polyubiquitinated by NEDD4, both with 'Lys-11'- and 'Lys-63'-linkages. 'Lys-11'-linked polyubiquitination leads to degradation and is enhanced when the stabilizing interaction partner VPS34 is depleted. Deubiquitinated by USP10 and USP13, leading to stabilize the PIK3C3/VPS34-containing complexes. Polyubiquitinated at Lys-402 with 'Lys-48'-linkages. 'Lys-48'-linked polyubiquitination of Lys-402 leads to degradation. Deubiquitinated by ATXN3, leading to stabilization. Ubiquitinated at Lys-437 via 'Lys-63'-linkage by the DCX(AMBRA1) complex, thereby increasing the association between BECN1 and PIK3C3 to promote PIK3C3 activity. 'Lys-48'-linked ubiquitination by RNF216 leads to proteasomal degradation and autophagy inhibition. Proteolytically processed by caspases including CASP8 and CASP3; the C-terminal fragments lack autophagy-inducing capacity and are proposed to induce apoptosis. Thus the cleavage is proposed to be an determinant to switch from autophagy to apoptosis pathways affecting cellular homeostasis including viral infections and survival of tumor cells.

The protein localises to the cytoplasm. It localises to the golgi apparatus. The protein resides in the trans-Golgi network membrane. It is found in the endosome membrane. Its subcellular location is the endoplasmic reticulum membrane. The protein localises to the mitochondrion membrane. It localises to the cytoplasmic vesicle. The protein resides in the autophagosome. It is found in the mitochondrion. Its subcellular location is the nucleus. In terms of biological role, plays a central role in autophagy. Acts as a core subunit of the PI3K complex that mediates formation of phosphatidylinositol 3-phosphate; different complex forms are believed to play a role in multiple membrane trafficking pathways: PI3KC3-C1 is involved in initiation of autophagosomes and PI3KC3-C2 in maturation of autophagosomes and endocytosis. Involved in regulation of degradative endocytic trafficking and required for the abscission step in cytokinesis, probably in the context of PI3KC3-C2. Essential for the formation of PI3KC3-C2 but not PI3KC3-C1 PI3K complex forms. Involved in endocytosis. May play a role in antiviral host defense. Its function is as follows. Beclin-1-C 35 kDa localized to mitochondria can promote apoptosis; it induces the mitochondrial translocation of BAX and the release of proapoptotic factors. This Pongo abelii (Sumatran orangutan) protein is Beclin-1 (BECN1).